The sequence spans 137 residues: Proofreading thioesterase EntH (137 aa).

Glu-63 (nucleophile or proton acceptor) is an active-site residue.

It belongs to the thioesterase PaaI family. Homotetramer. Dimer of dimers. Interacts specifically with the aryl carrier protein (ArCP) domain of EntB.

The protein localises to the cytoplasm. The protein operates within siderophore biosynthesis; enterobactin biosynthesis. Its function is as follows. Required for optimal enterobactin synthesis. Acts as a proofreading enzyme that prevents EntB misacylation by hydrolyzing the thioester bound existing between EntB and wrongly charged molecules. This chain is Proofreading thioesterase EntH, found in Salmonella paratyphi A (strain AKU_12601).